The primary structure comprises 73 residues: MIYKVLYQKDKIVNPRRETTQTLYMEADNMVEARSTVEDNTPYNIELIQELTGNSLAYEKEHADFKLTKFDKK.

Belongs to the RNA polymerase subunit epsilon family. RNAP is composed of a core of 2 alpha, a beta and a beta' subunit. The core is associated with a delta subunit, and at least one of epsilon or omega. When a sigma factor is associated with the core the holoenzyme is formed, which can initiate transcription.

The catalysed reaction is RNA(n) + a ribonucleoside 5'-triphosphate = RNA(n+1) + diphosphate. Functionally, a non-essential component of RNA polymerase (RNAP). In Lactobacillus helveticus (strain DPC 4571), this protein is DNA-directed RNA polymerase subunit epsilon.